Here is a 190-residue protein sequence, read N- to C-terminus: dTTP/UTP pyrophosphatase (190 aa).

D68 acts as the Proton acceptor in catalysis.

The protein belongs to the Maf family. YhdE subfamily. It depends on a divalent metal cation as a cofactor.

The protein resides in the cytoplasm. The enzyme catalyses dTTP + H2O = dTMP + diphosphate + H(+). It carries out the reaction UTP + H2O = UMP + diphosphate + H(+). Its function is as follows. Nucleoside triphosphate pyrophosphatase that hydrolyzes dTTP and UTP. May have a dual role in cell division arrest and in preventing the incorporation of modified nucleotides into cellular nucleic acids. The polypeptide is dTTP/UTP pyrophosphatase (Acholeplasma laidlawii (strain PG-8A)).